Here is a 185-residue protein sequence, read N- to C-terminus: Ribosome-recycling factor (185 aa).

Belongs to the RRF family.

It localises to the cytoplasm. Functionally, responsible for the release of ribosomes from messenger RNA at the termination of protein biosynthesis. May increase the efficiency of translation by recycling ribosomes from one round of translation to another. In Vibrio parahaemolyticus serotype O3:K6 (strain RIMD 2210633), this protein is Ribosome-recycling factor.